Here is a 161-residue protein sequence, read N- to C-terminus: uncharacterized protein (161 aa).

This is an uncharacterized protein from Haemophilus influenzae (strain ATCC 51907 / DSM 11121 / KW20 / Rd).